A 241-amino-acid polypeptide reads, in one-letter code: Protein-L-isoaspartate O-methyltransferase (241 aa).

Ser69 is a catalytic residue.

This sequence belongs to the methyltransferase superfamily. L-isoaspartyl/D-aspartyl protein methyltransferase family.

It localises to the cytoplasm. The enzyme catalyses [protein]-L-isoaspartate + S-adenosyl-L-methionine = [protein]-L-isoaspartate alpha-methyl ester + S-adenosyl-L-homocysteine. In terms of biological role, catalyzes the methyl esterification of L-isoaspartyl residues in peptides and proteins that result from spontaneous decomposition of normal L-aspartyl and L-asparaginyl residues. It plays a role in the repair and/or degradation of damaged proteins. This is Protein-L-isoaspartate O-methyltransferase from Hyperthermus butylicus (strain DSM 5456 / JCM 9403 / PLM1-5).